Consider the following 382-residue polypeptide: ATP phosphoribosyltransferase regulatory subunit (382 aa).

Belongs to the class-II aminoacyl-tRNA synthetase family. HisZ subfamily. In terms of assembly, heteromultimer composed of HisG and HisZ subunits.

It is found in the cytoplasm. It functions in the pathway amino-acid biosynthesis; L-histidine biosynthesis; L-histidine from 5-phospho-alpha-D-ribose 1-diphosphate: step 1/9. In terms of biological role, required for the first step of histidine biosynthesis. May allow the feedback regulation of ATP phosphoribosyltransferase activity by histidine. In Burkholderia cenocepacia (strain HI2424), this protein is ATP phosphoribosyltransferase regulatory subunit.